A 444-amino-acid polypeptide reads, in one-letter code: Killer cell immunoglobulin-like receptor 3DL1 (444 aa).

An N-terminal signal peptide occupies residues methionine 1–proline 21. The Extracellular portion of the chain corresponds to histidine 22 to histidine 340. Ig-like C2-type domains lie at glycine 42–serine 102, glycine 137–threonine 202, and glycine 237–serine 300. 3 disulfide bridges follow: cysteine 49–cysteine 95, cysteine 144–cysteine 195, and cysteine 244–cysteine 293. N-linked (GlcNAc...) asparagine glycosylation is found at asparagine 92, asparagine 179, and asparagine 273. The interval valine 315 to glycine 334 is disordered. Residues proline 319–serine 333 are compositionally biased toward low complexity. A helical membrane pass occupies residues isoleucine 341–leucine 360. The Cytoplasmic segment spans residues histidine 361–proline 444. 2 disordered regions span residues glutamine 375–glutamate 394 and arginine 409–proline 444.

Belongs to the immunoglobulin superfamily.

It localises to the cell membrane. Functionally, receptor on natural killer (NK) cells for HLA Bw4 allele. Inhibits the activity of NK cells thus preventing cell lysis. The protein is Killer cell immunoglobulin-like receptor 3DL1 of Homo sapiens (Human).